Consider the following 1165-residue polypeptide: ATP-dependent helicase/deoxyribonuclease subunit B (1165 aa).

A UvrD-like helicase ATP-binding domain is found at 1–324 (MRFIIGGAGS…LVEAQNRREE (324 aa)). Residue 6-13 (GGAGSGKS) coordinates ATP. Positions 282–597 (PLRFRGAPEL…IVGTVERSRH (316 aa)) constitute a UvrD-like helicase C-terminal domain. Residues Cys803, Cys1121, Cys1124, and Cys1130 each coordinate [4Fe-4S] cluster.

Belongs to the helicase family. AddB/RexB type 1 subfamily. In terms of assembly, heterodimer of AddA and AddB. It depends on Mg(2+) as a cofactor. Requires [4Fe-4S] cluster as cofactor.

Its function is as follows. The heterodimer acts as both an ATP-dependent DNA helicase and an ATP-dependent, dual-direction single-stranded exonuclease. Recognizes the chi site generating a DNA molecule suitable for the initiation of homologous recombination. The AddB subunit has 5' -&gt; 3' nuclease activity but not helicase activity. The chain is ATP-dependent helicase/deoxyribonuclease subunit B from Symbiobacterium thermophilum (strain DSM 24528 / JCM 14929 / IAM 14863 / T).